The sequence spans 944 residues: Bifunctional uridylyltransferase/uridylyl-removing enzyme (944 aa).

The segment at 1–371 (MRDLDFTNIL…RFTHRNRKIA (371 aa)) is uridylyltransferase. A uridylyl-removing region spans residues 372-727 (GSVEFVEDRG…VRTDSFHAIT (356 aa)). The 117-residue stretch at 488-604 (VDEHLIRTVD…TDFADRVQSL (117 aa)) folds into the HD domain. 2 ACT domains span residues 728 to 809 (EITV…EVIA) and 839 to 918 (VIEV…LRER). Residues 911–944 (EEDELRERMPSGIIAPAATARTPPASEKKAGSPI) are disordered. Low complexity predominate over residues 925 to 935 (APAATARTPPA).

Belongs to the GlnD family. Mg(2+) is required as a cofactor.

The catalysed reaction is [protein-PII]-L-tyrosine + UTP = [protein-PII]-uridylyl-L-tyrosine + diphosphate. It catalyses the reaction [protein-PII]-uridylyl-L-tyrosine + H2O = [protein-PII]-L-tyrosine + UMP + H(+). With respect to regulation, uridylyltransferase (UTase) activity is inhibited by glutamine, while glutamine likely activates uridylyl-removing (UR) activity. Modifies, by uridylylation and deuridylylation, the PII regulatory proteins GlnB and GlnK, in response to the nitrogen status of the cell that GlnD senses through the glutamine level. Under low glutamine levels, catalyzes the conversion of the PII proteins and UTP to PII-UMP and PPi, while under higher glutamine levels, GlnD likely hydrolyzes PII-UMP to PII and UMP (deuridylylation). Thus, controls uridylylation state and activity of the PII proteins, and plays an important role in the regulation of nitrogen metabolism. The sequence is that of Bifunctional uridylyltransferase/uridylyl-removing enzyme from Rhizobium leguminosarum bv. viciae.